A 630-amino-acid chain; its full sequence is 1-deoxy-D-xylulose-5-phosphate synthase (630 aa).

Thiamine diphosphate-binding positions include histidine 72 and 113–115 (GHS). Mg(2+) is bound at residue aspartate 144. Thiamine diphosphate-binding positions include 145–146 (GA), asparagine 173, tyrosine 284, and glutamate 367. Asparagine 173 is a binding site for Mg(2+).

It belongs to the transketolase family. DXPS subfamily. In terms of assembly, homodimer. Mg(2+) serves as cofactor. Thiamine diphosphate is required as a cofactor.

The catalysed reaction is D-glyceraldehyde 3-phosphate + pyruvate + H(+) = 1-deoxy-D-xylulose 5-phosphate + CO2. The protein operates within metabolic intermediate biosynthesis; 1-deoxy-D-xylulose 5-phosphate biosynthesis; 1-deoxy-D-xylulose 5-phosphate from D-glyceraldehyde 3-phosphate and pyruvate: step 1/1. In terms of biological role, catalyzes the acyloin condensation reaction between C atoms 2 and 3 of pyruvate and glyceraldehyde 3-phosphate to yield 1-deoxy-D-xylulose-5-phosphate (DXP). In Bacillus cereus (strain AH820), this protein is 1-deoxy-D-xylulose-5-phosphate synthase.